The primary structure comprises 166 residues: MRLILLSSLLLLGIFLANGHEEDPDGKVLNSLIDTLMHLQKLYANLKYSFLTVHRARSFGSGSERLYVTNKEIKNFEALRQICEQAEGHIPSPQLENQNKAFANVLERHGKEAYLVVGDSANFTNWAAGEPNKAAGTCVKADTHGSWHSASCDDNLLVVCEFYFIL.

The signal sequence occupies residues Met1–Gly19. One can recognise a C-type lectin domain in the interval Leu46–Glu161. 2 cysteine pairs are disulfide-bonded: Cys83–Cys160 and Cys138–Cys152. An N-linked (GlcNAc...) asparagine glycan is attached at Asn122.

This sequence belongs to the alpha-type phospholipase A2 inhibitor family. As to quaternary structure, homotrimer; non-covalently linked. In terms of tissue distribution, expressed by the liver.

Its subcellular location is the secreted. Functionally, this phospholipase A2 inhibitor binds directly phospholipase A2 in the presence or absence of calcium. The polypeptide is Phospholipase A2 inhibitor clone 10 (Bothrops moojeni (Lance-headed viper)).